The sequence spans 355 residues: Probable nitronate monooxygenase (355 aa).

FMN contacts are provided by residues Asn71, Gln175, Gly180, Gly218, and 237–240 (QMGT).

This sequence belongs to the nitronate monooxygenase family. NMO class I subfamily. It depends on FMN as a cofactor.

The catalysed reaction is 3 propionate 3-nitronate + 3 O2 + H2O = 3 3-oxopropanoate + 2 nitrate + nitrite + H2O2 + 3 H(+). Nitronate monooxygenase that uses molecular oxygen to catalyze the oxidative denitrification of alkyl nitronates. Acts on propionate 3-nitronate (P3N), the presumed physiological substrate. Probably functions in the detoxification of P3N, a metabolic poison produced by plants and fungi as a defense mechanism. This is Probable nitronate monooxygenase from Staphylococcus aureus (strain JH1).